The sequence spans 892 residues: Translation initiation factor IF-2 (892 aa).

Residues Arg-51 to Gln-296 are disordered. The span at Ser-68–Val-82 shows a compositional bias: polar residues. The segment covering Glu-99–Trp-217 has biased composition (basic and acidic residues). Positions Gln-224 to His-237 are enriched in polar residues. A compositionally biased stretch (basic and acidic residues) spans Arg-239–Arg-254. Positions Ser-255–Asn-269 are enriched in basic residues. Basic and acidic residues predominate over residues Lys-270–Ala-283. The tr-type G domain occupies His-391–Lys-560. The interval Gly-400–Thr-407 is G1. Position 400–407 (Gly-400–Thr-407) interacts with GTP. Residues Gly-425–His-429 are G2. The segment at Asp-446–Gly-449 is G3. GTP is bound by residues Asp-446–His-450 and Asn-500–Asp-503. The tract at residues Asn-500–Asp-503 is G4. The interval Ser-536–Lys-538 is G5.

It belongs to the TRAFAC class translation factor GTPase superfamily. Classic translation factor GTPase family. IF-2 subfamily.

It localises to the cytoplasm. Its function is as follows. One of the essential components for the initiation of protein synthesis. Protects formylmethionyl-tRNA from spontaneous hydrolysis and promotes its binding to the 30S ribosomal subunits. Also involved in the hydrolysis of GTP during the formation of the 70S ribosomal complex. The polypeptide is Translation initiation factor IF-2 (Yersinia enterocolitica serotype O:8 / biotype 1B (strain NCTC 13174 / 8081)).